The following is a 314-amino-acid chain: Methionyl-tRNA formyltransferase (314 aa).

110 to 113 lines the (6S)-5,6,7,8-tetrahydrofolate pocket; the sequence is SLLP.

This sequence belongs to the Fmt family.

The enzyme catalyses L-methionyl-tRNA(fMet) + (6R)-10-formyltetrahydrofolate = N-formyl-L-methionyl-tRNA(fMet) + (6S)-5,6,7,8-tetrahydrofolate + H(+). In terms of biological role, attaches a formyl group to the free amino group of methionyl-tRNA(fMet). The formyl group appears to play a dual role in the initiator identity of N-formylmethionyl-tRNA by promoting its recognition by IF2 and preventing the misappropriation of this tRNA by the elongation apparatus. This is Methionyl-tRNA formyltransferase from Dichelobacter nodosus (strain VCS1703A).